The chain runs to 227 residues: Cytochrome c oxidase subunit 2 (227 aa).

At 1-14 (MAYPLQLGLQDATS) the chain is on the mitochondrial intermembrane side. A helical transmembrane segment spans residues 15-45 (PIMEELTSFHDHTLMIVFLISSLVLYIISSM). Residues 46 to 59 (LTTKMTHTNTMDAQ) are Mitochondrial matrix-facing. Residues 60–87 (GVETIWTILPAAILVLIALPSLRILYMM) form a helical membrane-spanning segment. The Mitochondrial intermembrane portion of the chain corresponds to 88–227 (DEINNPALTV…HFENWSASMI (140 aa)). Cu cation is bound by residues H161, C196, E198, C200, H204, and M207. Position 198 (E198) interacts with Mg(2+).

The protein belongs to the cytochrome c oxidase subunit 2 family. As to quaternary structure, component of the cytochrome c oxidase (complex IV, CIV), a multisubunit enzyme composed of 14 subunits. The complex is composed of a catalytic core of 3 subunits MT-CO1, MT-CO2 and MT-CO3, encoded in the mitochondrial DNA, and 11 supernumerary subunits COX4I, COX5A, COX5B, COX6A, COX6B, COX6C, COX7A, COX7B, COX7C, COX8 and NDUFA4, which are encoded in the nuclear genome. The complex exists as a monomer or a dimer and forms supercomplexes (SCs) in the inner mitochondrial membrane with NADH-ubiquinone oxidoreductase (complex I, CI) and ubiquinol-cytochrome c oxidoreductase (cytochrome b-c1 complex, complex III, CIII), resulting in different assemblies (supercomplex SCI(1)III(2)IV(1) and megacomplex MCI(2)III(2)IV(2)). Found in a complex with TMEM177, COA6, COX18, COX20, SCO1 and SCO2. Interacts with TMEM177 in a COX20-dependent manner. Interacts with COX20. Interacts with COX16. Requires Cu cation as cofactor.

It localises to the mitochondrion inner membrane. It catalyses the reaction 4 Fe(II)-[cytochrome c] + O2 + 8 H(+)(in) = 4 Fe(III)-[cytochrome c] + 2 H2O + 4 H(+)(out). In terms of biological role, component of the cytochrome c oxidase, the last enzyme in the mitochondrial electron transport chain which drives oxidative phosphorylation. The respiratory chain contains 3 multisubunit complexes succinate dehydrogenase (complex II, CII), ubiquinol-cytochrome c oxidoreductase (cytochrome b-c1 complex, complex III, CIII) and cytochrome c oxidase (complex IV, CIV), that cooperate to transfer electrons derived from NADH and succinate to molecular oxygen, creating an electrochemical gradient over the inner membrane that drives transmembrane transport and the ATP synthase. Cytochrome c oxidase is the component of the respiratory chain that catalyzes the reduction of oxygen to water. Electrons originating from reduced cytochrome c in the intermembrane space (IMS) are transferred via the dinuclear copper A center (CU(A)) of subunit 2 and heme A of subunit 1 to the active site in subunit 1, a binuclear center (BNC) formed by heme A3 and copper B (CU(B)). The BNC reduces molecular oxygen to 2 water molecules using 4 electrons from cytochrome c in the IMS and 4 protons from the mitochondrial matrix. The sequence is that of Cytochrome c oxidase subunit 2 (MT-CO2) from Acomys ignitus (Fiery spiny mouse).